We begin with the raw amino-acid sequence, 305 residues long: UDP-3-O-acyl-N-acetylglucosamine deacetylase (305 aa).

Zn(2+) contacts are provided by histidine 79, histidine 238, and aspartate 242. Histidine 265 acts as the Proton donor in catalysis.

It belongs to the LpxC family. Zn(2+) is required as a cofactor.

The catalysed reaction is a UDP-3-O-[(3R)-3-hydroxyacyl]-N-acetyl-alpha-D-glucosamine + H2O = a UDP-3-O-[(3R)-3-hydroxyacyl]-alpha-D-glucosamine + acetate. The protein operates within glycolipid biosynthesis; lipid IV(A) biosynthesis; lipid IV(A) from (3R)-3-hydroxytetradecanoyl-[acyl-carrier-protein] and UDP-N-acetyl-alpha-D-glucosamine: step 2/6. Catalyzes the hydrolysis of UDP-3-O-myristoyl-N-acetylglucosamine to form UDP-3-O-myristoylglucosamine and acetate, the committed step in lipid A biosynthesis. The chain is UDP-3-O-acyl-N-acetylglucosamine deacetylase from Salmonella paratyphi A (strain ATCC 9150 / SARB42).